The primary structure comprises 460 residues: Bifunctional protein GlmU (460 aa).

Residues 1–229 (MTNYAIILAA…FNESLGVNDR (229 aa)) are pyrophosphorylase. Residues 8–11 (LAAG), K22, Q72, and 77–78 (GT) each bind UDP-N-acetyl-alpha-D-glucosamine. D102 contacts Mg(2+). Residues G139, E154, N169, and N227 each contribute to the UDP-N-acetyl-alpha-D-glucosamine site. Position 227 (N227) interacts with Mg(2+). The segment at 230–250 (VALATAETVMRQRITQKHMVN) is linker. The segment at 251 to 460 (GVTFQNPETV…RLAHHPSRSK (210 aa)) is N-acetyltransferase. Positions 332 and 350 each coordinate UDP-N-acetyl-alpha-D-glucosamine. H362 serves as the catalytic Proton acceptor. Residues Y365 and N376 each contribute to the UDP-N-acetyl-alpha-D-glucosamine site. Acetyl-CoA contacts are provided by residues A379, 385–386 (NY), S404, A422, and R439.

This sequence in the N-terminal section; belongs to the N-acetylglucosamine-1-phosphate uridyltransferase family. In the C-terminal section; belongs to the transferase hexapeptide repeat family. Homotrimer. Mg(2+) serves as cofactor.

Its subcellular location is the cytoplasm. It catalyses the reaction alpha-D-glucosamine 1-phosphate + acetyl-CoA = N-acetyl-alpha-D-glucosamine 1-phosphate + CoA + H(+). The enzyme catalyses N-acetyl-alpha-D-glucosamine 1-phosphate + UTP + H(+) = UDP-N-acetyl-alpha-D-glucosamine + diphosphate. It participates in nucleotide-sugar biosynthesis; UDP-N-acetyl-alpha-D-glucosamine biosynthesis; N-acetyl-alpha-D-glucosamine 1-phosphate from alpha-D-glucosamine 6-phosphate (route II): step 2/2. Its pathway is nucleotide-sugar biosynthesis; UDP-N-acetyl-alpha-D-glucosamine biosynthesis; UDP-N-acetyl-alpha-D-glucosamine from N-acetyl-alpha-D-glucosamine 1-phosphate: step 1/1. The protein operates within bacterial outer membrane biogenesis; LPS lipid A biosynthesis. Functionally, catalyzes the last two sequential reactions in the de novo biosynthetic pathway for UDP-N-acetylglucosamine (UDP-GlcNAc). The C-terminal domain catalyzes the transfer of acetyl group from acetyl coenzyme A to glucosamine-1-phosphate (GlcN-1-P) to produce N-acetylglucosamine-1-phosphate (GlcNAc-1-P), which is converted into UDP-GlcNAc by the transfer of uridine 5-monophosphate (from uridine 5-triphosphate), a reaction catalyzed by the N-terminal domain. The protein is Bifunctional protein GlmU of Streptococcus pyogenes serotype M5 (strain Manfredo).